The following is a 271-amino-acid chain: Small ribosomal subunit protein uS2 (271 aa).

This sequence belongs to the universal ribosomal protein uS2 family.

The protein is Small ribosomal subunit protein uS2 of Wolbachia pipientis subsp. Culex pipiens (strain wPip).